Reading from the N-terminus, the 831-residue chain is Periplasmic nitrate reductase (831 aa).

Residues 1 to 29 (MTLSRRDFIKQTAVAATASVAGVTLPAGA) constitute a signal peptide (tat-type signal). The 4Fe-4S Mo/W bis-MGD-type domain occupies 41-97 (LKWSKAPCRFCGTGCGVTVAVRDNKVVATNGDPQAEVNKGLNCVKGYFLSKIMYGQD). Cys-48, Cys-51, Cys-55, and Cys-83 together coordinate [4Fe-4S] cluster. Mo-bis(molybdopterin guanine dinucleotide)-binding positions include Lys-85, Gln-152, Asn-177, Cys-181, 214–221 (WGSNMAEM), 245–249 (STFTH), 264–266 (QTD), Met-375, Gln-379, Asn-485, 511–512 (SD), Lys-534, Asp-561, and 721–730 (TGRVLEHWHS). Trp-797 contributes to the substrate binding site. 2 residues coordinate Mo-bis(molybdopterin guanine dinucleotide): Asn-805 and Lys-822.

This sequence belongs to the prokaryotic molybdopterin-containing oxidoreductase family. NasA/NapA/NarB subfamily. In terms of assembly, component of the periplasmic nitrate reductase NapAB complex composed of NapA and NapB. Requires [4Fe-4S] cluster as cofactor. It depends on Mo-bis(molybdopterin guanine dinucleotide) as a cofactor. In terms of processing, predicted to be exported by the Tat system. The position of the signal peptide cleavage has not been experimentally proven.

It is found in the periplasm. It catalyses the reaction 2 Fe(II)-[cytochrome] + nitrate + 2 H(+) = 2 Fe(III)-[cytochrome] + nitrite + H2O. Catalytic subunit of the periplasmic nitrate reductase complex NapAB. Receives electrons from NapB and catalyzes the reduction of nitrate to nitrite. The polypeptide is Periplasmic nitrate reductase (Cupriavidus taiwanensis (strain DSM 17343 / BCRC 17206 / CCUG 44338 / CIP 107171 / LMG 19424 / R1) (Ralstonia taiwanensis (strain LMG 19424))).